An 86-amino-acid chain; its full sequence is Small ribosomal subunit protein bS18c (86 aa).

Belongs to the bacterial ribosomal protein bS18 family. As to quaternary structure, part of the 30S ribosomal subunit.

It is found in the plastid. The protein resides in the chloroplast. This chain is Small ribosomal subunit protein bS18c, found in Larix laricina (Tamarack).